A 629-amino-acid chain; its full sequence is MPSDANEMQARLLQLFEHSTLSTKAKFGLRVIRDPKLAGIGILGRGKIFSCFHEDHLEEASRLAEVLVGAETFDEFIDLCHQCRDFVNEALFVYSLSVAILHRPDCHGISLPPIQEIFPDKFVPVETIYKAFKEATRHADKTDDIIVDMEATGTIMDPEYNLAYYREDIGINAHHWHWHVVYPSAWDSVKMHMRKDRKGELFFYMHQQMCARYDCERLSNGLARMIPFHNFHEPLEGYNPHLSSTQNGLPYAFRPEPMTLCDMHDVSVQDLERWRERILDAINLGEVTDPNGDEYALDETFGIDVLGAIIESSRDSKNRESYGSLHNWGHVLMANIVDPDGKYQTNPGVMDDTATSLRDPIFYRWHRFIDDMFQEFKRKLKPYTKDQLSFTGVEIKNVKVHAHEENVITTTFVEDLLEISNAFNFGRTGAVKVRYQHLDHEPFVYDIEVENHSARLRHGTCRIFLAPVHDELQNQLTPEELRRLMIELDRFRVELKPGVNHNHRHSRDSSVTISKQPKFDELLKGKGTNNANEYCSCGWPDHLLVPKGNDRGMPFHLCVMITDYLYDLVGDYGYDTPCVDAVSYCGAKDSLYPDRRAMGFPFDRPIPEGHASNLHQPNVSFSQIKIQHH.

H175, H179, H206, H326, H330, and H366 together coordinate Cu cation. N451 carries N-linked (GlcNAc...) asparagine glycosylation. C537 and C585 are joined by a disulfide. The N-linked (GlcNAc...) asparagine glycan is linked to N618.

The protein belongs to the tyrosinase family. Hemocyanin subfamily. As to quaternary structure, tarantula hemocyanin is a 24-chain polymer with seven different chains identified. As to expression, hemolymph.

The protein localises to the secreted. The protein resides in the extracellular space. Its function is as follows. Hemocyanins are copper-containing oxygen carriers occurring freely dissolved in the hemolymph of many mollusks and arthropods. This chain is Hemocyanin C chain (HCC), found in Aphonopelma sp. (American tarantula).